A 476-amino-acid chain; its full sequence is Bifunctional protein HldE (476 aa).

The tract at residues 1 to 318 is ribokinase; it reads MKVTLPDFRR…ENAIRGRAET (318 aa). 195–198 lines the ATP pocket; that stretch reads NLSE. Asp-264 is an active-site residue. Residues 344–476 are cytidylyltransferase; sequence MTNGIFDILH…IIQSIKNGRG (133 aa).

This sequence in the N-terminal section; belongs to the carbohydrate kinase PfkB family. In the C-terminal section; belongs to the cytidylyltransferase family. As to quaternary structure, homodimer.

It catalyses the reaction D-glycero-beta-D-manno-heptose 7-phosphate + ATP = D-glycero-beta-D-manno-heptose 1,7-bisphosphate + ADP + H(+). The catalysed reaction is D-glycero-beta-D-manno-heptose 1-phosphate + ATP + H(+) = ADP-D-glycero-beta-D-manno-heptose + diphosphate. It functions in the pathway nucleotide-sugar biosynthesis; ADP-L-glycero-beta-D-manno-heptose biosynthesis; ADP-L-glycero-beta-D-manno-heptose from D-glycero-beta-D-manno-heptose 7-phosphate: step 1/4. Its pathway is nucleotide-sugar biosynthesis; ADP-L-glycero-beta-D-manno-heptose biosynthesis; ADP-L-glycero-beta-D-manno-heptose from D-glycero-beta-D-manno-heptose 7-phosphate: step 3/4. Functionally, catalyzes the phosphorylation of D-glycero-D-manno-heptose 7-phosphate at the C-1 position to selectively form D-glycero-beta-D-manno-heptose-1,7-bisphosphate. In terms of biological role, catalyzes the ADP transfer from ATP to D-glycero-beta-D-manno-heptose 1-phosphate, yielding ADP-D-glycero-beta-D-manno-heptose. The sequence is that of Bifunctional protein HldE from Yersinia pseudotuberculosis serotype O:1b (strain IP 31758).